A 286-amino-acid polypeptide reads, in one-letter code: GTP cyclohydrolase MptA (286 aa).

It belongs to the GTP cyclohydrolase IV family. Homodimer. Fe(2+) is required as a cofactor.

It carries out the reaction GTP + H2O = 7,8-dihydroneopterin 2',3'-cyclic phosphate + formate + diphosphate + H(+). It functions in the pathway cofactor biosynthesis; 5,6,7,8-tetrahydromethanopterin biosynthesis. Converts GTP to 7,8-dihydro-D-neopterin 2',3'-cyclic phosphate, the first intermediate in the biosynthesis of coenzyme methanopterin. This chain is GTP cyclohydrolase MptA, found in Thermoplasma acidophilum (strain ATCC 25905 / DSM 1728 / JCM 9062 / NBRC 15155 / AMRC-C165).